The primary structure comprises 356 residues: Homoserine O-acetyltransferase (356 aa).

An AB hydrolase-1 domain is found at 49–337 (VLICHALTGS…KSTHGHDAFL (289 aa)). Ser-143 acts as the Nucleophile in catalysis. Arg-212 provides a ligand contact to substrate. Active-site residues include Asp-304 and His-333. A substrate-binding site is contributed by Asp-334.

This sequence belongs to the AB hydrolase superfamily. MetX family. As to quaternary structure, homodimer.

The protein localises to the cytoplasm. It catalyses the reaction L-homoserine + acetyl-CoA = O-acetyl-L-homoserine + CoA. Its pathway is amino-acid biosynthesis; L-methionine biosynthesis via de novo pathway; O-acetyl-L-homoserine from L-homoserine: step 1/1. Transfers an acetyl group from acetyl-CoA to L-homoserine, forming acetyl-L-homoserine. The sequence is that of Homoserine O-acetyltransferase from Nostoc punctiforme (strain ATCC 29133 / PCC 73102).